The chain runs to 222 residues: Pyridoxine/pyridoxamine 5'-phosphate oxidase (222 aa).

Residues 11–14 (RVEY) and K79 each bind substrate. Residues 74–79 (RTVLCK), 89–90 (YT), K96, and Q118 contribute to the FMN site. Residues Y136, R140, and S144 each coordinate substrate. FMN-binding positions include 153–154 (QS) and W199. Residue 205-207 (RVH) participates in substrate binding. Position 209 (R209) interacts with FMN.

Belongs to the pyridoxamine 5'-phosphate oxidase family. As to quaternary structure, homodimer. FMN is required as a cofactor.

The catalysed reaction is pyridoxamine 5'-phosphate + O2 + H2O = pyridoxal 5'-phosphate + H2O2 + NH4(+). It catalyses the reaction pyridoxine 5'-phosphate + O2 = pyridoxal 5'-phosphate + H2O2. The protein operates within cofactor metabolism; pyridoxal 5'-phosphate salvage; pyridoxal 5'-phosphate from pyridoxamine 5'-phosphate: step 1/1. It participates in cofactor metabolism; pyridoxal 5'-phosphate salvage; pyridoxal 5'-phosphate from pyridoxine 5'-phosphate: step 1/1. In terms of biological role, catalyzes the oxidation of either pyridoxine 5'-phosphate (PNP) or pyridoxamine 5'-phosphate (PMP) into pyridoxal 5'-phosphate (PLP). The protein is Pyridoxine/pyridoxamine 5'-phosphate oxidase of Mycolicibacterium vanbaalenii (strain DSM 7251 / JCM 13017 / BCRC 16820 / KCTC 9966 / NRRL B-24157 / PYR-1) (Mycobacterium vanbaalenii).